A 157-amino-acid polypeptide reads, in one-letter code: SsrA-binding protein (157 aa).

This sequence belongs to the SmpB family.

The protein localises to the cytoplasm. Functionally, required for rescue of stalled ribosomes mediated by trans-translation. Binds to transfer-messenger RNA (tmRNA), required for stable association of tmRNA with ribosomes. tmRNA and SmpB together mimic tRNA shape, replacing the anticodon stem-loop with SmpB. tmRNA is encoded by the ssrA gene; the 2 termini fold to resemble tRNA(Ala) and it encodes a 'tag peptide', a short internal open reading frame. During trans-translation Ala-aminoacylated tmRNA acts like a tRNA, entering the A-site of stalled ribosomes, displacing the stalled mRNA. The ribosome then switches to translate the ORF on the tmRNA; the nascent peptide is terminated with the 'tag peptide' encoded by the tmRNA and targeted for degradation. The ribosome is freed to recommence translation, which seems to be the essential function of trans-translation. In Aquifex aeolicus (strain VF5), this protein is SsrA-binding protein.